Consider the following 387-residue polypeptide: Phosphoglycerate kinase (387 aa).

Residues 21 to 23, Arg36, 59 to 62, Arg113, and Arg146 each bind substrate; these read DLN and HLGR. ATP is bound by residues Lys197, Glu314, and 340-343; that span reads GGDT.

It belongs to the phosphoglycerate kinase family. Monomer.

The protein localises to the cytoplasm. The catalysed reaction is (2R)-3-phosphoglycerate + ATP = (2R)-3-phospho-glyceroyl phosphate + ADP. The protein operates within carbohydrate degradation; glycolysis; pyruvate from D-glyceraldehyde 3-phosphate: step 2/5. The chain is Phosphoglycerate kinase (pgk) from Pasteurella multocida (strain Pm70).